A 428-amino-acid chain; its full sequence is Threonine synthase (428 aa).

Lys-107 is modified (N6-(pyridoxal phosphate)lysine).

It belongs to the threonine synthase family. It depends on pyridoxal 5'-phosphate as a cofactor.

The catalysed reaction is O-phospho-L-homoserine + H2O = L-threonine + phosphate. Its pathway is amino-acid biosynthesis; L-threonine biosynthesis; L-threonine from L-aspartate: step 5/5. Is competitively inhibited by L-threo-3-hydroxyhomoserine phosphate. Its function is as follows. Catalyzes the gamma-elimination of phosphate from L-phosphohomoserine and the beta-addition of water to produce L-threonine. To a lesser extent, is able to slowly catalyze the deamination of L-threonine into alpha-ketobutyrate and that of L-serine and 3-chloroalanine into pyruvate. Is also able to rapidly convert vinylglycine to threonine, which proves that the pyridoxal p-quinonoid of vinylglycine is an intermediate in the TS reaction. In Escherichia coli (strain K12), this protein is Threonine synthase (thrC).